A 265-amino-acid chain; its full sequence is UPF0354 protein GTNG_2723 (265 aa).

Belongs to the UPF0354 family.

The polypeptide is UPF0354 protein GTNG_2723 (Geobacillus thermodenitrificans (strain NG80-2)).